A 359-amino-acid chain; its full sequence is Protein RecA (359 aa).

Position 69-76 (69-76) interacts with ATP; sequence GPESSGKT. Positions 337–359 are disordered; that stretch reads SANSVAKASEEDEEEEVDLEPEE. A compositionally biased stretch (acidic residues) spans 346–359; the sequence is EEDEEEEVDLEPEE.

This sequence belongs to the RecA family.

The protein localises to the cytoplasm. Functionally, can catalyze the hydrolysis of ATP in the presence of single-stranded DNA, the ATP-dependent uptake of single-stranded DNA by duplex DNA, and the ATP-dependent hybridization of homologous single-stranded DNAs. It interacts with LexA causing its activation and leading to its autocatalytic cleavage. This chain is Protein RecA, found in Nostoc punctiforme (strain ATCC 29133 / PCC 73102).